Here is a 232-residue protein sequence, read N- to C-terminus: Secreted LysM effector Mg3LysM (232 aa).

The N-terminal stretch at 1–16 is a signal peptide; that stretch reads MQNIFLAATLLGAAFA. In terms of domain architecture, LysM 1 spans 47–91; the sequence is TNYTVKAGDTLGAIAKQYNSGVCDIAKVNGIDNPDYIKPDQVLSI. N48, N100, N138, N195, N209, and N227 each carry an N-linked (GlcNAc...) asparagine glycan. 2 consecutive LysM domains span residues 120-165 and 177-221; these read STYT…VINT and GTYV…IIIL.

It belongs to the secreted LysM effector family.

Secreted effector that enables the plant pathogenic fungus to manipulate host defenses for successful infection. Binds chitin fragments and blocks the activation of chitin-induced plant defense responses. Protects fungal hyphae against hydrolytic plant enzymes. This is Secreted LysM effector Mg3LysM from Zymoseptoria tritici (strain CBS 115943 / IPO323) (Speckled leaf blotch fungus).